The chain runs to 322 residues: Ribose-phosphate pyrophosphokinase 1 (322 aa).

Residues D39–E41 and R98–Q99 contribute to the ATP site. Residues H132 and D173 each coordinate Mg(2+). K196 is an active-site residue. Residues R198, D224, and D228–T232 each bind D-ribose 5-phosphate.

The protein belongs to the ribose-phosphate pyrophosphokinase family. Class I subfamily. As to quaternary structure, homohexamer. Requires Mg(2+) as cofactor.

It is found in the cytoplasm. The enzyme catalyses D-ribose 5-phosphate + ATP = 5-phospho-alpha-D-ribose 1-diphosphate + AMP + H(+). The protein operates within metabolic intermediate biosynthesis; 5-phospho-alpha-D-ribose 1-diphosphate biosynthesis; 5-phospho-alpha-D-ribose 1-diphosphate from D-ribose 5-phosphate (route I): step 1/1. Functionally, involved in the biosynthesis of the central metabolite phospho-alpha-D-ribosyl-1-pyrophosphate (PRPP) via the transfer of pyrophosphoryl group from ATP to 1-hydroxyl of ribose-5-phosphate (Rib-5-P). This is Ribose-phosphate pyrophosphokinase 1 from Streptococcus mutans serotype c (strain ATCC 700610 / UA159).